A 290-amino-acid polypeptide reads, in one-letter code: Poly-beta-1,6-N-acetyl-D-glucosamine N-deacetylase (290 aa).

Positions 1-28 (MKYRKFIILVLSILIILPVSTLDGHHIA) are cleaved as a signal peptide. The 177-residue stretch at 114–290 (RSVWINFDDM…KRWDGFHEKD (177 aa)) folds into the NodB homology domain.

The protein belongs to the polysaccharide deacetylase family.

It is found in the secreted. Its subcellular location is the cell wall. Its function is as follows. Catalyzes the N-deacetylation of poly-beta-1,6-N-acetyl-D-glucosamine (PNAG, also referred to as PIA), a biofilm adhesin polysaccharide. N-deacetylation is crucial for attachment of the polysaccharide to the bacterial cell surface; it leads to the introduction of positive charges in the otherwise neutral PIA polymer, allowing electrostatic interactions. The sequence is that of Poly-beta-1,6-N-acetyl-D-glucosamine N-deacetylase (icaB) from Staphylococcus aureus (strain NCTC 8325 / PS 47).